Consider the following 154-residue polypeptide: Toxin YhaV (154 aa).

In terms of assembly, homohexamer; forms a complex with PrlF (SohA) with stoichiometry PrlF(2)-YhaV(4), possibly as a YhaV(2)-PrlF(2)-YhaV(2) complex like the MazFE complex. May dimerize in solution.

Its function is as follows. Toxic component of a type II toxin-antitoxin (TA) system. Has RNase activity in vitro. Acts as a transcription factor. The YhaV/PrlF complex binds the prlF-yhaV operon, probably negatively regulating its expression. The polypeptide is Toxin YhaV (yhaV) (Escherichia coli O6:H1 (strain CFT073 / ATCC 700928 / UPEC)).